The sequence spans 267 residues: tRNA pseudouridine synthase A (267 aa).

Residue Asp-51 is the Nucleophile of the active site. Tyr-109 lines the substrate pocket.

Belongs to the tRNA pseudouridine synthase TruA family.

The catalysed reaction is uridine(38/39/40) in tRNA = pseudouridine(38/39/40) in tRNA. Formation of pseudouridine at positions 38, 39 and 40 in the anticodon stem and loop of transfer RNAs. In Methanothrix thermoacetophila (strain DSM 6194 / JCM 14653 / NBRC 101360 / PT) (Methanosaeta thermophila), this protein is tRNA pseudouridine synthase A.